The sequence spans 698 residues: Interleukin enhancer-binding factor 3 (698 aa).

Positions arginine 5–glycine 379 constitute a DZF domain. 3 disordered regions span residues glutamine 51–threonine 88, proline 374–alanine 403, and glutamate 473–lysine 522. Acidic residues predominate over residues glutamate 61–threonine 71. Basic and acidic residues-rich tracts occupy residues glutamate 72–threonine 81 and proline 374–proline 384. Residues lysine 372–lysine 390 carry the Bipartite nuclear localization signal motif. In terms of domain architecture, DRBM 1 spans glutamate 399–leucine 468. Residues threonine 490–alanine 503 show a composition bias toward polar residues. Positions histidine 520–proline 586 constitute a DRBM 2 domain.

As to quaternary structure, a component of a ybx2/frgy2-containing mRNA-ribonucleoprotein (mRNP) complex. Also a component of the CCAAT box transcription factor (CBTF) complex. Post-translationally, phosphorylated. Phosphorylation affects nuclear translocation. Methylated by protein arginine N-methyltransferase 1 (prmt1b) in the RGG-rich domain. Methylation decreases DNA-binding and thereby decreases transcription of the gata2 gene, but does not regulate dsRNA binding or subcellular localization.

The protein localises to the nucleus. The protein resides in the cytoplasm. Its function is as follows. RNA-binding protein that plays an essential role in the biogenesis of circular RNAs (circRNAs) which are produced by back-splicing circularization of pre-mRNAs. Within the nucleus, promotes circRNAs processing by stabilizing the regulatory elements residing in the flanking introns of the circularized exons. Plays thereby a role in the back-splicing of a subset of circRNAs. As a consequence, participates in a wide range of transcriptional and post-transcriptional processes. Binds to poly-U elements and AU-rich elements (AREs) in the 3'-UTR of target mRNAs. Upon viral infection, ILF3 accumulates in the cytoplasm and participates in the innate antiviral response. Mechanistically, ILF3 becomes phosphorylated and activated by the double-stranded RNA-activated protein kinase/PKR which releases ILF3 from cellular mature circRNAs. In turn, unbound ILF3 molecules are able to interact with and thus inhibit viral mRNAs. Has a cytoplasmic role early in development as part of a ribonucleoprotein (mRNP) complex which may regulate mRNA transport and/or translation. Following nuclear localization at the mid-blastula transition, acts as a transcription factor and binds the 5'-CCAAT-3' promoter sequence to regulate transcription of the gata2 gene as a subunit of the CCAAT box transcription factor (CBTF). Its role as an mRNP component negatively regulates its activity as a transcription factor by precluding its nuclear localization. This is Interleukin enhancer-binding factor 3 from Xenopus tropicalis (Western clawed frog).